The following is a 349-amino-acid chain: Fructose-1,6-bisphosphatase class 1 (349 aa).

Residues E92, D113, L115, and D116 each coordinate Mg(2+). Residues 116 to 119 (DGSS), N209, Y242, and K272 contribute to the substrate site. E278 is a Mg(2+) binding site.

The protein belongs to the FBPase class 1 family. As to quaternary structure, homotetramer. It depends on Mg(2+) as a cofactor.

The protein resides in the cytoplasm. The catalysed reaction is beta-D-fructose 1,6-bisphosphate + H2O = beta-D-fructose 6-phosphate + phosphate. It participates in carbohydrate biosynthesis; Calvin cycle. This Chloroherpeton thalassium (strain ATCC 35110 / GB-78) protein is Fructose-1,6-bisphosphatase class 1.